The primary structure comprises 478 residues: Protein nucleotidyltransferase YdiU (478 aa).

ATP contacts are provided by G84, G86, R87, K107, D119, G120, R170, and R177. The active-site Proton acceptor is D246. 2 residues coordinate Mg(2+): N247 and D256. D256 is a binding site for ATP.

Belongs to the SELO family. It depends on Mg(2+) as a cofactor. The cofactor is Mn(2+).

It catalyses the reaction L-seryl-[protein] + ATP = 3-O-(5'-adenylyl)-L-seryl-[protein] + diphosphate. It carries out the reaction L-threonyl-[protein] + ATP = 3-O-(5'-adenylyl)-L-threonyl-[protein] + diphosphate. The enzyme catalyses L-tyrosyl-[protein] + ATP = O-(5'-adenylyl)-L-tyrosyl-[protein] + diphosphate. The catalysed reaction is L-histidyl-[protein] + UTP = N(tele)-(5'-uridylyl)-L-histidyl-[protein] + diphosphate. It catalyses the reaction L-seryl-[protein] + UTP = O-(5'-uridylyl)-L-seryl-[protein] + diphosphate. It carries out the reaction L-tyrosyl-[protein] + UTP = O-(5'-uridylyl)-L-tyrosyl-[protein] + diphosphate. Its function is as follows. Nucleotidyltransferase involved in the post-translational modification of proteins. It can catalyze the addition of adenosine monophosphate (AMP) or uridine monophosphate (UMP) to a protein, resulting in modifications known as AMPylation and UMPylation. The sequence is that of Protein nucleotidyltransferase YdiU from Escherichia coli O1:K1 / APEC.